An 895-amino-acid polypeptide reads, in one-letter code: MRTEKLFFCILLVFFFCLEFNRGQNNGKTLVDVGVVTDVDTSHSKVVMLCINMSISDFYSSNPQFETRLVVNVGDSKSDVVGAAIAALDLIKNKQVKAILGPWTSMQAHFLIEIGQKSRVPIVSYSATSPILTSLRSPYFLRATYEDSFQVQPIKAIIKLFGWREVVPVYIDNTFGEGIMPRLTDALQDINVRIPYRSVIAINATDHEISVELLKMMNMPTRVFLVHMYYDLASRFFIKAKELGLMEPGYVWILTNGVIDDLSLINETAVEAMEGVLGIKTYIPKSPDLEKFRSRWRSLFPRVELSVYGLWAYDATTALAVAIEEAGTNNMTFSKVVDTGRNVSELEALGLSQFGPKLLQTLLTVQFRGLAGEFRFFRGQLQPSVFEIVNIINTGEKSIGFWKEGNGLVKKLDQQASSISALSTWKDHLKHIVWPGEADSVPKGWQIPTKGKKLRIGVPKRTGYTDLVKVTRDPITNSTVVTGFCIDFFEAVIRELPYDVSYEFIPFEKPDGKTAGNYNDLVYQVYLGRYDAVVGDTTILVNRSSYVDFTFPFIKSGVGLIVEMTDPVKRDYILFMKPLSWKLWLTSFISFFLVGCTVWVLEYKRNPDFSGPPRFQASTICWFAFSTMVFAPRERVFSFWARALVIAWYFLVLVLTQSYTASLASLLTSQKLNPTITSMSSLLEKGETVGYQRTSFILGKLKERGFPQSSLVPFDTAEECDELLSKGPKKGGVSGAFLEIPYLRLFLGQFCNTYKMVEEPFNVDGFGFVFPIGSPLVADVSRAILKVAESPKAMELERAWFKKKEQSCPDPITNPDPNPSFTSRQLDIDSFLFLFVGVLLVCVMALGNFTYCFLAKDQVSYLDKVEMSPCSSSQQMPVKRKTQLNMSQVHDQDSL.

The N-terminal stretch at 1–23 (MRTEKLFFCILLVFFFCLEFNRG) is a signal peptide. Residues 24 to 582 (QNNGKTLVDV…ILFMKPLSWK (559 aa)) lie on the Extracellular side of the membrane. N-linked (GlcNAc...) asparagine glycans are attached at residues asparagine 52, asparagine 203, asparagine 266, asparagine 330, asparagine 342, asparagine 477, and asparagine 542. Residues 583-603 (LWLTSFISFFLVGCTVWVLEY) form a helical membrane-spanning segment. The Cytoplasmic portion of the chain corresponds to 604 to 610 (KRNPDFS). Residues 611–631 (GPPRFQASTICWFAFSTMVFA) form a helical membrane-spanning segment. Over 632–635 (PRER) the chain is Cytoplasmic. The chain crosses the membrane as a helical span at residues 636-656 (VFSFWARALVIAWYFLVLVLT). The Extracellular portion of the chain corresponds to 657–830 (QSYTASLASL…FTSRQLDIDS (174 aa)). Residues 831 to 851 (FLFLFVGVLLVCVMALGNFTY) form a helical membrane-spanning segment. Topologically, residues 852–895 (CFLAKDQVSYLDKVEMSPCSSSQQMPVKRKTQLNMSQVHDQDSL) are cytoplasmic. The disordered stretch occupies residues 873 to 895 (SQQMPVKRKTQLNMSQVHDQDSL).

The protein belongs to the glutamate-gated ion channel (TC 1.A.10.1) family. May form heteromers. In terms of tissue distribution, expressed predominantly in roots.

Its subcellular location is the membrane. Its function is as follows. Glutamate-gated receptor that probably acts as a non-selective cation channel. May be involved in light-signal transduction and calcium homeostasis via the regulation of calcium influx into cells. This Arabidopsis thaliana (Mouse-ear cress) protein is Glutamate receptor 2.3 (GLR2.3).